The primary structure comprises 151 residues: Prefoldin subunit alpha (151 aa).

The interval 120 to 151 (TVEEETASLEEKAQQAQQQQMQQLQQMQQEDE) is disordered. A compositionally biased stretch (low complexity) spans 133–151 (QQAQQQQMQQLQQMQQEDE).

This sequence belongs to the prefoldin subunit alpha family. As to quaternary structure, heterohexamer of two alpha and four beta subunits.

It localises to the cytoplasm. In terms of biological role, molecular chaperone capable of stabilizing a range of proteins. Seems to fulfill an ATP-independent, HSP70-like function in archaeal de novo protein folding. This is Prefoldin subunit alpha from Natronomonas pharaonis (strain ATCC 35678 / DSM 2160 / CIP 103997 / JCM 8858 / NBRC 14720 / NCIMB 2260 / Gabara) (Halobacterium pharaonis).